We begin with the raw amino-acid sequence, 149 residues long: UPF0336 protein CMM_2793 (149 aa).

The region spanning 16-117 is the MaoC-like domain; the sequence is APYLVGREKV…TVTKVATLGG (102 aa).

The protein belongs to the UPF0336 family.

This is UPF0336 protein CMM_2793 from Clavibacter michiganensis subsp. michiganensis (strain NCPPB 382).